A 153-amino-acid chain; its full sequence is Small ribosomal subunit protein bS6 (153 aa).

The interval glutamate 94–alanine 153 is disordered.

The protein belongs to the bacterial ribosomal protein bS6 family.

Its function is as follows. Binds together with bS18 to 16S ribosomal RNA. In Agrobacterium fabrum (strain C58 / ATCC 33970) (Agrobacterium tumefaciens (strain C58)), this protein is Small ribosomal subunit protein bS6.